The sequence spans 345 residues: D-fructose 1,6-bisphosphatase class 2/sedoheptulose 1,7-bisphosphatase (345 aa).

Mn(2+)-binding residues include D33, E57, D97, and E100. Substrate contacts are provided by residues 100–102, Y131, 176–178, and 198–200; these read EGT, RDR, and DGD. Residue E225 participates in Mn(2+) binding.

This sequence belongs to the FBPase class 2 family. In terms of assembly, homotetramer. The cofactor is Mn(2+).

The enzyme catalyses beta-D-fructose 1,6-bisphosphate + H2O = beta-D-fructose 6-phosphate + phosphate. It catalyses the reaction D-sedoheptulose 1,7-bisphosphate + H2O = D-sedoheptulose 7-phosphate + phosphate. It functions in the pathway carbohydrate biosynthesis; Calvin cycle. Its function is as follows. Catalyzes the hydrolysis of fructose 1,6-bisphosphate (Fru 1,6-P2) and sedoheptulose 1,7-bisphosphate (Sed 1,7-P2) to fructose 6-phosphate and sedoheptulose 7-phosphate, respectively. This chain is D-fructose 1,6-bisphosphatase class 2/sedoheptulose 1,7-bisphosphatase, found in Nostoc sp. (strain PCC 7120 / SAG 25.82 / UTEX 2576).